Consider the following 834-residue polypeptide: Periplasmic nitrate reductase (834 aa).

Positions 1–29 (MKLSRREFAKANAAAIAAAAAGLPLASTA) form a signal peptide, tat-type signal. One can recognise a 4Fe-4S Mo/W bis-MGD-type domain in the interval 41-97 (LDWNKAPCRFCGTGCSVMVATRDNRVVATHGDVKAEVNRGLNCVKGYFLSKIMYGVD). Positions 48, 51, 55, and 83 each coordinate [4Fe-4S] cluster. Mo-bis(molybdopterin guanine dinucleotide)-binding positions include Lys85, Gln152, Asn177, Cys181, 214-221 (WGSNMAEM), 245-249 (STFEH), 264-266 (QTD), Met375, Gln379, Asn485, 511-512 (SD), Lys534, Asp561, and 721-730 (TGRVLEHWHT). Phe797 lines the substrate pocket. Mo-bis(molybdopterin guanine dinucleotide) contacts are provided by Asn805 and Lys822.

Belongs to the prokaryotic molybdopterin-containing oxidoreductase family. NasA/NapA/NarB subfamily. In terms of assembly, component of the periplasmic nitrate reductase NapAB complex composed of NapA and NapB. It depends on [4Fe-4S] cluster as a cofactor. Mo-bis(molybdopterin guanine dinucleotide) is required as a cofactor. In terms of processing, predicted to be exported by the Tat system. The position of the signal peptide cleavage has not been experimentally proven.

The protein resides in the periplasm. The enzyme catalyses 2 Fe(II)-[cytochrome] + nitrate + 2 H(+) = 2 Fe(III)-[cytochrome] + nitrite + H2O. In terms of biological role, catalytic subunit of the periplasmic nitrate reductase complex NapAB. Receives electrons from NapB and catalyzes the reduction of nitrate to nitrite. The polypeptide is Periplasmic nitrate reductase (Ectopseudomonas mendocina (strain ymp) (Pseudomonas mendocina)).